The chain runs to 177 residues: ATP synthase subunit delta (177 aa).

The protein belongs to the ATPase delta chain family. F-type ATPases have 2 components, F(1) - the catalytic core - and F(0) - the membrane proton channel. F(1) has five subunits: alpha(3), beta(3), gamma(1), delta(1), epsilon(1). F(0) has three main subunits: a(1), b(2) and c(10-14). The alpha and beta chains form an alternating ring which encloses part of the gamma chain. F(1) is attached to F(0) by a central stalk formed by the gamma and epsilon chains, while a peripheral stalk is formed by the delta and b chains.

It is found in the cell inner membrane. F(1)F(0) ATP synthase produces ATP from ADP in the presence of a proton or sodium gradient. F-type ATPases consist of two structural domains, F(1) containing the extramembraneous catalytic core and F(0) containing the membrane proton channel, linked together by a central stalk and a peripheral stalk. During catalysis, ATP synthesis in the catalytic domain of F(1) is coupled via a rotary mechanism of the central stalk subunits to proton translocation. Its function is as follows. This protein is part of the stalk that links CF(0) to CF(1). It either transmits conformational changes from CF(0) to CF(1) or is implicated in proton conduction. The chain is ATP synthase subunit delta from Neisseria meningitidis serogroup A / serotype 4A (strain DSM 15465 / Z2491).